Here is a 315-residue protein sequence, read N- to C-terminus: Isoaspartyl peptidase/L-asparaginase 1 (315 aa).

Position 169 is a phosphoserine (Ser169). Residue Thr183 is the Nucleophile of the active site. Substrate-binding positions include 211-214 (RIGD) and 233-236 (TGKG).

Belongs to the Ntn-hydrolase family. Heterotetramer of two alpha and two beta chains arranged as a dimer of alpha/beta heterodimers. Post-translationally, cleaved into an alpha and beta chain by autocatalysis; this activates the enzyme. The N-terminal residue of the beta subunit is responsible for the nucleophile hydrolase activity.

It carries out the reaction Cleavage of a beta-linked Asp residue from the N-terminus of a polypeptide.. Its function is as follows. Acts in asparagine catabolism but also in the final steps of protein and degradation via hydrolysis of a range of isoaspartyl dipeptides. The affinity for Asn and at least 4 isoaspartyl dipeptides (L-beta-Asp-Ala, L-beta-Asp-Gly, L-beta-Asp-Leu, L-beta-Asp-Phe) is quite low, KM being greater than 4.0 mM. The enzyme is inactive on alpha-aspartyl dipeptides. This Arabidopsis thaliana (Mouse-ear cress) protein is Isoaspartyl peptidase/L-asparaginase 1.